A 182-amino-acid polypeptide reads, in one-letter code: ATP synthase subunit b, chloroplastic (182 aa).

Residues Val-33–Leu-55 traverse the membrane as a helical segment.

The protein belongs to the ATPase B chain family. F-type ATPases have 2 components, F(1) - the catalytic core - and F(0) - the membrane proton channel. F(1) has five subunits: alpha(3), beta(3), gamma(1), delta(1), epsilon(1). F(0) has four main subunits: a(1), b(1), b'(1) and c(10-14). The alpha and beta chains form an alternating ring which encloses part of the gamma chain. F(1) is attached to F(0) by a central stalk formed by the gamma and epsilon chains, while a peripheral stalk is formed by the delta, b and b' chains.

It is found in the plastid. The protein localises to the chloroplast thylakoid membrane. In terms of biological role, f(1)F(0) ATP synthase produces ATP from ADP in the presence of a proton or sodium gradient. F-type ATPases consist of two structural domains, F(1) containing the extramembraneous catalytic core and F(0) containing the membrane proton channel, linked together by a central stalk and a peripheral stalk. During catalysis, ATP synthesis in the catalytic domain of F(1) is coupled via a rotary mechanism of the central stalk subunits to proton translocation. Functionally, component of the F(0) channel, it forms part of the peripheral stalk, linking F(1) to F(0). This is ATP synthase subunit b, chloroplastic from Antithamnion sp. (Red alga).